The sequence spans 150 residues: Ribonuclease H (150 aa).

The RNase H type-1 domain occupies 3–144 (DKDMIEIWTD…ADGLARKGTD (142 aa)). Mg(2+) is bound by residues Asp-12, Glu-50, Asp-72, and Asp-136. Positions 129–150 (DEGNERADGLARKGTDEVRGRK) are disordered.

It belongs to the RNase H family. Monomer. Requires Mg(2+) as cofactor.

Its subcellular location is the cytoplasm. The enzyme catalyses Endonucleolytic cleavage to 5'-phosphomonoester.. Functionally, endonuclease that specifically degrades the RNA of RNA-DNA hybrids. The protein is Ribonuclease H of Hyphomonas neptunium (strain ATCC 15444).